The primary structure comprises 489 residues: Coronin-1B (489 aa).

Phosphoserine; by PKC is present on S2. WD repeat units lie at residues 18-72 (QPVK…GRID), 73-122 (KAYP…SPLT), 123-166 (EPVV…GTAE), 167-210 (ELYR…RGTL), 211-256 (VAER…ENLE), and 257-296 (EPMA…RYFE). The tract at residues 408–444 (RRNVLSDSRPAMAPGSSHLGAPASTTTAADATPSGSL) is disordered. The span at 428 to 441 (APASTTTAADATPS) shows a compositional bias: low complexity. A coiled-coil region spans residues 449–474 (EAGKLEEVMQELRALRALVKEQGDRI).

This sequence belongs to the WD repeat coronin family. In terms of assembly, forms homooligomers, but does not form complexes with the other coronins. Interacts with Arp2/3 complex components, including ACTR2, ARPC1B and ARPC2. Binds actin. Phosphorylation by PKC on Ser-2 regulates the interaction with the Arp2/3 complex and cell motility in fibroblasts. Phosphorylation does not seem to affect subcellular location.

It localises to the cytoplasm. The protein resides in the cytoskeleton. Its subcellular location is the stress fiber. Its function is as follows. Regulates leading edge dynamics and cell motility in fibroblasts. May be involved in cytokinesis and signal transduction. This chain is Coronin-1B (CORO1B), found in Homo sapiens (Human).